Reading from the N-terminus, the 122-residue chain is Succinate dehydrogenase assembly factor 3, mitochondrial (122 aa).

A mitochondrion-targeting transit peptide spans 1-47 (MHPSVVRLVKPRRPERITSPILPPLPLYRAILRAHHRKLPQELRYLG).

It belongs to the complex I LYR family. SDHAF3 subfamily. In terms of assembly, interacts with the iron-sulfur protein subunit within the SDH catalytic dimer.

The protein resides in the mitochondrion matrix. Functionally, plays an essential role in the assembly of succinate dehydrogenase (SDH), an enzyme complex (also referred to as respiratory complex II) that is a component of both the tricarboxylic acid (TCA) cycle and the mitochondrial electron transport chain, and which couples the oxidation of succinate to fumarate with the reduction of ubiquinone (coenzyme Q) to ubiquinol. Promotes maturation of the iron-sulfur protein subunit of the SDH catalytic dimer, protecting it from the deleterious effects of oxidants. May act together with SDHAF1. The protein is Succinate dehydrogenase assembly factor 3, mitochondrial of Candida albicans (strain SC5314 / ATCC MYA-2876) (Yeast).